A 325-amino-acid polypeptide reads, in one-letter code: Iodotyrosine dehalogenase 1 homolog (325 aa).

A helical membrane pass occupies residues 42–62; it reads VLNVLFTLGVILFVIYQVASL. Residues 63–325 lie on the Cytoplasmic side of the membrane; the sequence is LHRMNKRVEK…KPVEHITKLY (263 aa). Residues 135–139, 163–164, 273–275, and Arg315 each bind FMN; these read RRSCR, SV, and VTS.

This sequence belongs to the nitroreductase family. Requires FMN as cofactor. Expressed in body-wall, anal depressor and vulval muscles.

The protein localises to the membrane. Its function is as follows. May contribute to coordination of muscle contraction as regulatory subunit of the nonessential sup-9 potassium channel complex. May act downstream of sup-10. This Caenorhabditis elegans protein is Iodotyrosine dehalogenase 1 homolog.